The sequence spans 133 residues: uncharacterized protein (133 aa).

Positions 1-130 (MPNIVEIAVS…GIIHVIDNVI (130 aa)) constitute an FAS1 domain.

This is an uncharacterized protein from Synechocystis sp. (strain ATCC 27184 / PCC 6803 / Kazusa).